Consider the following 850-residue polypeptide: Endoribonuclease ysh-1 (850 aa).

Zn(2+) contacts are provided by His83, His85, Asp87, His88, His173, and Asp194. His442 serves as the catalytic Proton donor. His464 is a binding site for Zn(2+). 2 disordered regions span residues 685 to 708 (VKRS…PHSH) and 732 to 784 (SPIV…EQQL). Positions 744–754 (PTTKAITSPSE) are enriched in polar residues. Residues 755 to 766 (ETAKSSDVKSDA) show a composition bias toward basic and acidic residues. The segment covering 767–781 (DADASMDVSEEDEDE) has biased composition (acidic residues).

It belongs to the metallo-beta-lactamase superfamily. RNA-metabolizing metallo-beta-lactamase-like family. CPSF2/YSH1 subfamily.

The protein resides in the nucleus. Functionally, component of the cleavage factor I (CF I) involved in pre-mRNA 3'-end processing. The chain is Endoribonuclease ysh-1 (ysh-1) from Neurospora crassa (strain ATCC 24698 / 74-OR23-1A / CBS 708.71 / DSM 1257 / FGSC 987).